Consider the following 367-residue polypeptide: Heme A synthase (367 aa).

Transmembrane regions (helical) follow at residues 26-46 (IRGW…VGGA), 111-131 (LLAR…WVTG), 139-159 (LPLL…WWMV), 174-194 (LATH…IYRG), and 212-232 (AGAI…VAGL). H274 contributes to the heme binding site. Transmembrane regions (helical) follow at residues 276 to 296 (LGAY…LRAA), 305 to 325 (SVLL…TLLL), and 327 to 347 (VPIG…GFAI). H335 lines the heme pocket.

Belongs to the COX15/CtaA family. Type 2 subfamily. In terms of assembly, interacts with CtaB. It depends on heme b as a cofactor.

Its subcellular location is the cell membrane. It catalyses the reaction Fe(II)-heme o + 2 A + H2O = Fe(II)-heme a + 2 AH2. The protein operates within porphyrin-containing compound metabolism; heme A biosynthesis; heme A from heme O: step 1/1. Its function is as follows. Catalyzes the conversion of heme O to heme A by two successive hydroxylations of the methyl group at C8. The first hydroxylation forms heme I, the second hydroxylation results in an unstable dihydroxymethyl group, which spontaneously dehydrates, resulting in the formyl group of heme A. This Rhizobium meliloti (strain 1021) (Ensifer meliloti) protein is Heme A synthase.